A 78-amino-acid chain; its full sequence is Large ribosomal subunit protein bL28 (78 aa).

The protein belongs to the bacterial ribosomal protein bL28 family.

This is Large ribosomal subunit protein bL28 from Prochlorococcus marinus (strain MIT 9303).